Here is a 279-residue protein sequence, read N- to C-terminus: Probable endonuclease 4 (279 aa).

Zn(2+)-binding residues include histidine 69, histidine 109, glutamate 145, aspartate 179, histidine 182, histidine 216, aspartate 229, histidine 231, and glutamate 261.

Belongs to the AP endonuclease 2 family. Requires Zn(2+) as cofactor.

It carries out the reaction Endonucleolytic cleavage to 5'-phosphooligonucleotide end-products.. Its function is as follows. Endonuclease IV plays a role in DNA repair. It cleaves phosphodiester bonds at apurinic or apyrimidinic (AP) sites, generating a 3'-hydroxyl group and a 5'-terminal sugar phosphate. The sequence is that of Probable endonuclease 4 from Tolumonas auensis (strain DSM 9187 / NBRC 110442 / TA 4).